The following is a 530-amino-acid chain: MDLGVRVSGHETVSSPGQTELGSGFSNKQERSGFDGEDCWRSSKLSRTSTDGFSSSPASAKTLSFHQGIPLLRSTTINDPRKGQEHMLSFSSASGKSDVSPYLQYCRNSGYGLGGMMNTSNMHGNLLTGVKGPFSLTQWAELEQQALIYKYITANVPVPSSLLLSLKKSFFPYGSLPPNSFGWGSFHLGFSGGNMDPEPGRCRRTDGKKWRCSRDAVPDQKYCERHINRGRHRSRKPVEGQNGHNTNAAAAASAAAASTAAAVSKAAAGTSAVAMRGSDNNNSLAAAVGTQHHTNNQSTDSLANRVQNSRGASVFPATMNLQSKETHPKQSNNPFEFGLISSDSLLNPSHKQASYATSSKGFGSYLDFGNQAKHAGNHNNVDSWPEELKSDWTQLSMSIPMAPSSPVQDKLALSPLRLSREFDPAIHMGLGVNTEFLDPGKKTNNWIPISWGNNNSMGGPLGEVLNSTTNSPKFGSSPTGVLQKSTFGSLSNSSSASSTIIGDNNNKNGDGKDPLGPTTLMNTSATAPSL.

Positions 1 to 41 (MDLGVRVSGHETVSSPGQTELGSGFSNKQERSGFDGEDCWR) are disordered. Over residues 11 to 27 (ETVSSPGQTELGSGFSN) the composition is skewed to polar residues. Residues 28–41 (KQERSGFDGEDCWR) show a composition bias toward basic and acidic residues. In terms of domain architecture, QLQ spans 133-168 (PFSLTQWAELEQQALIYKYITANVPVPSSLLLSLKK). Residues 196-240 (DPEPGRCRRTDGKKWRCSRDAVPDQKYCERHINRGRHRSRKPVEG) enclose the WRC domain. Short sequence motifs (bipartite nuclear localization signal) lie at residues 201-211 (RCRRTDGKKWR) and 229-236 (RGRHRSRK). Disordered stretches follow at residues 223 to 250 (CERH…NAAA) and 485 to 530 (STFG…APSL). Over residues 485–508 (STFGSLSNSSSASSTIIGDNNNKN) the composition is skewed to low complexity. Positions 519-530 (TLMNTSATAPSL) are enriched in polar residues.

Belongs to the GRF family. As to quaternary structure, interacts with GIF1 and GIF2. As to expression, strongly expressed in actively growing and developing tissues, such as roots, upper stems, and shoot tips containing the shoot apical meristem (SAM) and flower buds. Also expressed in mature flowers, but weakly expressed in mature stems and leaves.

The protein localises to the nucleus. Its function is as follows. Transcription activator that plays a role in the regulation of cell expansion in leaf and cotyledons tissues. Component of a network formed by miR396, the GRFs and their interacting factors (GIFs) acting in the regulation of meristem function, at least partially through the control of cell proliferation. microRNA396-GRF1/GRF3 regulatory module acts as a developmental regulator in the reprogramming of root cells during cyst nematode infection, leading to the formation of the syncytium. The protein is Growth-regulating factor 1 (GRF1) of Arabidopsis thaliana (Mouse-ear cress).